Here is a 348-residue protein sequence, read N- to C-terminus: MRVLTIFLLFMTSIFAVQIKDVANTVGVRDNQLIGYGLVVGLNGSGDGTSSKFTLQSISNLLQGMNIKVDPNDIKSKNTAAVMVTAKLPAFAKSGDKLDITVSSMGDAKSLQGGTLLLTALRGIDGEIYAIAQGSISTGGLTPRPGGAGSHSTAATVMGGANVEREIPQNFSQNNDLTLSLKVADFKTANDIERVLNTVFGEEVAKAIDSRTVKLKKPEDLSNVDFMARVLEQDIAYKPQSKVIIDERTGTVIAGVDVEVEPVLITHKDITIKIDPNNNAVANQNEIDMKDGGFVDPSSNTLRINNAKSTVANIARMLNKLGATPNDIIAIMENLKRAGAINADLEII.

The N-terminal stretch at 1 to 16 is a signal peptide; the sequence is MRVLTIFLLFMTSIFA.

The protein belongs to the FlgI family. As to quaternary structure, the basal body constitutes a major portion of the flagellar organelle and consists of four rings (L,P,S, and M) mounted on a central rod.

The protein localises to the periplasm. It is found in the bacterial flagellum basal body. Its function is as follows. Assembles around the rod to form the L-ring and probably protects the motor/basal body from shearing forces during rotation. The sequence is that of Flagellar P-ring protein from Campylobacter jejuni subsp. jejuni serotype O:6 (strain 81116 / NCTC 11828).